Here is a 501-residue protein sequence, read N- to C-terminus: Lysine--tRNA ligase (501 aa).

Mg(2+) contacts are provided by Glu-411 and Glu-418.

It belongs to the class-II aminoacyl-tRNA synthetase family. As to quaternary structure, homodimer. The cofactor is Mg(2+).

It is found in the cytoplasm. The enzyme catalyses tRNA(Lys) + L-lysine + ATP = L-lysyl-tRNA(Lys) + AMP + diphosphate. This chain is Lysine--tRNA ligase, found in Shewanella woodyi (strain ATCC 51908 / MS32).